Consider the following 1154-residue polypeptide: Kinesin-like protein KIN-7E, chloroplastic (1154 aa).

Composition is skewed to low complexity over residues Met1–Pro14 and Val29–Ala109. Residues Met1–Ser21 constitute a chloroplast transit peptide. The disordered stretch occupies residues Met1–Ala109. Residues Asn119–Ile437 enclose the Kinesin motor domain. Gly199–Thr206 is a binding site for ATP. Residues Ala441 to Leu523 are a coiled coil. Residues Leu620 to Thr674 form a disordered region. Positions Ser628–Ser640 are enriched in low complexity. 2 coiled-coil regions span residues Asp734–Arg761 and Ala801–Ala845. The segment at Ala838–Leu885 is disordered. A compositionally biased stretch (low complexity) spans Ser846–Ser857. Positions Ala894–Arg967 form a coiled coil.

This sequence belongs to the TRAFAC class myosin-kinesin ATPase superfamily. Kinesin family. KIN-7 subfamily.

Its subcellular location is the plastid. The protein localises to the chloroplast. This chain is Kinesin-like protein KIN-7E, chloroplastic, found in Oryza sativa subsp. japonica (Rice).